Consider the following 241-residue polypeptide: ATP synthase subunit a (241 aa).

Transmembrane regions (helical) follow at residues 30–50, 89–109, 128–148, 193–213, and 214–234; these read GQIFLSSWILIGALLAFVLVG, LPFIGTLFLFIFVSNWGGALI, INTTVAMALLVTLAYFYAGLS, LAVGVLVYLVPLIVPLPVMLL, and GLFTSAIQALIFATLAAFYIG.

It belongs to the ATPase A chain family. As to quaternary structure, F-type ATPases have 2 components, CF(1) - the catalytic core - and CF(0) - the membrane proton channel. CF(1) has five subunits: alpha(3), beta(3), gamma(1), delta(1), epsilon(1). CF(0) has four main subunits: a, b, b' and c.

Its subcellular location is the cellular thylakoid membrane. Key component of the proton channel; it plays a direct role in the translocation of protons across the membrane. This Synechococcus sp. (strain CC9311) protein is ATP synthase subunit a.